Here is a 338-residue protein sequence, read N- to C-terminus: Ketol-acid reductoisomerase (NADP(+)) (338 aa).

In terms of domain architecture, KARI N-terminal Rossmann spans 1 to 181 (MKVFYDKDAD…GGGRAGIIET (181 aa)). NADP(+)-binding positions include 24 to 27 (YGSQ), Arg-47, and Ser-52. His-107 is a catalytic residue. An NADP(+)-binding site is contributed by Gly-133. Residues 182-327 (NFREETETDL…SKLRAMMPWI (146 aa)) form the KARI C-terminal knotted domain. Mg(2+)-binding residues include Asp-190, Glu-194, Glu-226, and Glu-230. Ser-251 lines the substrate pocket.

The protein belongs to the ketol-acid reductoisomerase family. Mg(2+) is required as a cofactor.

It catalyses the reaction (2R)-2,3-dihydroxy-3-methylbutanoate + NADP(+) = (2S)-2-acetolactate + NADPH + H(+). The catalysed reaction is (2R,3R)-2,3-dihydroxy-3-methylpentanoate + NADP(+) = (S)-2-ethyl-2-hydroxy-3-oxobutanoate + NADPH + H(+). Its pathway is amino-acid biosynthesis; L-isoleucine biosynthesis; L-isoleucine from 2-oxobutanoate: step 2/4. It participates in amino-acid biosynthesis; L-valine biosynthesis; L-valine from pyruvate: step 2/4. Involved in the biosynthesis of branched-chain amino acids (BCAA). Catalyzes an alkyl-migration followed by a ketol-acid reduction of (S)-2-acetolactate (S2AL) to yield (R)-2,3-dihydroxy-isovalerate. In the isomerase reaction, S2AL is rearranged via a Mg-dependent methyl migration to produce 3-hydroxy-3-methyl-2-ketobutyrate (HMKB). In the reductase reaction, this 2-ketoacid undergoes a metal-dependent reduction by NADPH to yield (R)-2,3-dihydroxy-isovalerate. In Burkholderia mallei (strain NCTC 10229), this protein is Ketol-acid reductoisomerase (NADP(+)).